The sequence spans 557 residues: CTP synthase (557 aa).

The tract at residues 1–270 (MTKYVFVTGG…DAIICEELKL (270 aa)) is amidoligase domain. Serine 13 contributes to the CTP binding site. Serine 13 is a binding site for UTP. Residues 14 to 19 (SLGKGI) and aspartate 71 each bind ATP. Mg(2+)-binding residues include aspartate 71 and glutamate 144. CTP is bound by residues 151 to 153 (DIE), 191 to 196 (KTKPTQ), and lysine 227. Residues 191 to 196 (KTKPTQ) and lysine 227 contribute to the UTP site. The 253-residue stretch at 295-547 (TIGMVGKYVD…VEAALAHHEA (253 aa)) folds into the Glutamine amidotransferase type-1 domain. Glycine 356 lines the L-glutamine pocket. Cysteine 383 acts as the Nucleophile; for glutamine hydrolysis in catalysis. L-glutamine is bound by residues 384-387 (LGMQ), glutamate 407, and arginine 473. Active-site residues include histidine 520 and glutamate 522.

This sequence belongs to the CTP synthase family. As to quaternary structure, homotetramer.

It carries out the reaction UTP + L-glutamine + ATP + H2O = CTP + L-glutamate + ADP + phosphate + 2 H(+). It catalyses the reaction L-glutamine + H2O = L-glutamate + NH4(+). The catalysed reaction is UTP + NH4(+) + ATP = CTP + ADP + phosphate + 2 H(+). The protein operates within pyrimidine metabolism; CTP biosynthesis via de novo pathway; CTP from UDP: step 2/2. With respect to regulation, allosterically activated by GTP, when glutamine is the substrate; GTP has no effect on the reaction when ammonia is the substrate. The allosteric effector GTP functions by stabilizing the protein conformation that binds the tetrahedral intermediate(s) formed during glutamine hydrolysis. Inhibited by the product CTP, via allosteric rather than competitive inhibition. Its function is as follows. Catalyzes the ATP-dependent amination of UTP to CTP with either L-glutamine or ammonia as the source of nitrogen. Regulates intracellular CTP levels through interactions with the four ribonucleotide triphosphates. The chain is CTP synthase from Paraburkholderia phytofirmans (strain DSM 17436 / LMG 22146 / PsJN) (Burkholderia phytofirmans).